The primary structure comprises 431 residues: Histidinol dehydrogenase (431 aa).

3 residues coordinate NAD(+): Tyr127, Gln189, and Asn212. Substrate is bound by residues Ser237, Gln259, and His262. Zn(2+) contacts are provided by Gln259 and His262. Catalysis depends on proton acceptor residues Glu326 and His327. Substrate-binding residues include His327, Asp360, Glu414, and His419. Asp360 provides a ligand contact to Zn(2+). Zn(2+) is bound at residue His419.

The protein belongs to the histidinol dehydrogenase family. Requires Zn(2+) as cofactor.

It carries out the reaction L-histidinol + 2 NAD(+) + H2O = L-histidine + 2 NADH + 3 H(+). Its pathway is amino-acid biosynthesis; L-histidine biosynthesis; L-histidine from 5-phospho-alpha-D-ribose 1-diphosphate: step 9/9. Functionally, catalyzes the sequential NAD-dependent oxidations of L-histidinol to L-histidinaldehyde and then to L-histidine. This chain is Histidinol dehydrogenase, found in Xanthomonas oryzae pv. oryzae (strain KACC10331 / KXO85).